We begin with the raw amino-acid sequence, 92 residues long: Protein canopy homolog 1 (92 aa).

Belongs to the canopy family.

This chain is Protein canopy homolog 1 (CNPY1), found in Homo sapiens (Human).